Consider the following 410-residue polypeptide: Mannosyl phosphorylinositol ceramide synthase regulatory protein CSG2 (410 aa).

The first 17 residues, 1–17, serve as a signal peptide directing secretion; it reads MSTTLLWFSSVIGYVIQ. Topologically, residues 18–50 are lumenal; that stretch reads TKCLSNIQSKKEISVGPNGTIATPETNGDNGNS. Residues Asn-35 and Asn-49 are each glycosylated (N-linked (GlcNAc...) asparagine). The chain crosses the membrane as a helical span at residues 51–71; that stretch reads SSLTFYLTFMYFASWLLLVPA. At 72–141 the chain is on the cytoplasmic side; that stretch reads SRLWEKMRPM…SVATFKYVAK (70 aa). A helical membrane pass occupies residues 142-161; the sequence is LTVLALIMIVADLTYNMALS. Topologically, residues 162–167 are lumenal; sequence LSPAFD. A helical transmembrane segment spans residues 168 to 187; that stretch reads VALMQNTAIFEIVTLLYGVC. The Cytoplasmic segment spans residues 188–197; sequence GISRKNYVFR. Residues 198-217 traverse the membrane as a helical segment; it reads NFLIMMNAVIGILIISYTKA. Residues 218–245 lie on the Lumenal side of the membrane; that stretch reads TCDMLAGKLSVNPNTGELSDPFLFDRLK. A helical transmembrane segment spans residues 246 to 265; sequence GALICGLGALIMGPFAVLWN. The Cytoplasmic segment spans residues 266-285; the sequence is RWFCSNISKNENSAVVLVKQ. Residues 286–305 traverse the membrane as a helical segment; that stretch reads STHMALIGIIGMVILLPFIP. At 306 to 324 the chain is on the lumenal side; it reads KFPSRESVESISLFYNDKS. Residues 325–344 traverse the membrane as a helical segment; the sequence is FWFSLLGSIIFGSLPSLISI. Topologically, residues 345–355 are cytoplasmic; that stretch reads LELNRKAPAEY. A helical transmembrane segment spans residues 356-374; the sequence is LTTCNLGAIIFMGLAEWVC. Topologically, residues 375 to 385 are lumenal; it reads EPTQTTIVRWE. A helical membrane pass occupies residues 386 to 404; sequence VIGYIMLTVSLLVLSVTLG. Topologically, residues 405-410 are cytoplasmic; sequence EGKYHH.

As to quaternary structure, heterodimer of CSH1 and CSG2, and SUR1 and CSG2.

The protein localises to the endoplasmic reticulum membrane. Required for calcium regulation. May regulate calcium accumulation by a non-vacuole organelle. Also regulates the activity of CSH1 and SUR1 during mannosyl phosphorylinositol ceramide synthesis. This chain is Mannosyl phosphorylinositol ceramide synthase regulatory protein CSG2 (CSG2), found in Saccharomyces cerevisiae (strain ATCC 204508 / S288c) (Baker's yeast).